A 233-amino-acid chain; its full sequence is Upstream activation factor subunit spp27 (233 aa).

One can recognise a DEK-C domain in the interval 1–53; the sequence is MEEYETDIKQILGTVDRQTVSAKQVRQLLEERRKVDLSAHKKDLNALILKCFD. 2 disordered regions span residues 55-122 and 194-233; these read TAAP…KPMK and IPDD…ESTA. Positions 116 to 193 constitute an SWIB/MDM2 domain; sequence PLNKPMKLSP…NKYLTNLMTK (78 aa). Residues 194-208 show a composition bias toward basic and acidic residues; sequence IPDDQLPKPQPKNEE.

In terms of assembly, component of the UAF (upstream activation factor) complex which consists of spp27/uaf30, rrn5, rrn10, and histones H3 and H4. Interacts with rrn10.

Its subcellular location is the cytoplasm. It localises to the nucleus. In terms of biological role, component of the UAF (upstream activation factor) complex which interacts with the upstream element of the RNA polymerase I promoter and forms a stable preinitiation complex. UAF seems to stimulate basal transcription to a fully activated level. The chain is Upstream activation factor subunit spp27 (spp27) from Schizosaccharomyces pombe (strain 972 / ATCC 24843) (Fission yeast).